The sequence spans 179 residues: Replication restart protein DnaT (179 aa).

The segment covering 151–168 (SRSSNGGMPQRDINSVSE) has biased composition (polar residues). Positions 151–179 (SRSSNGGMPQRDINSVSEPDNHIPPGFRG) are disordered.

It belongs to the DnaT family. As to quaternary structure, homooligomerizes. Interacts with PriB. Component of the replication restart primosome. Primosome assembly occurs via a 'hand-off' mechanism. PriA binds to replication forks, subsequently PriB then DnaT bind; DnaT then displaces ssDNA to generate the helicase loading substrate.

In terms of biological role, involved in the restart of stalled replication forks, which reloads the replicative helicase on sites other than the origin of replication. Can function in multiple replication restart pathways. Displaces ssDNA from a PriB-ssDNA complex. Probably forms a spiral filament on ssDNA. The sequence is that of Replication restart protein DnaT from Salmonella heidelberg (strain SL476).